Reading from the N-terminus, the 144-residue chain is Cytochrome c-type biogenesis protein CcmE (144 aa).

Residues 1 to 7 (MKPRHKR) are Cytoplasmic-facing. A helical; Signal-anchor for type II membrane protein transmembrane segment spans residues 8–28 (ALMIVAALAVIGIAALLILNA). Residues 29–144 (LNSNIALYVT…EQAQKNGSAK (116 aa)) lie on the Extracellular side of the membrane. 2 residues coordinate heme: His-121 and Tyr-125.

The protein belongs to the CcmE/CycJ family.

The protein localises to the cell membrane. In terms of biological role, heme chaperone required for the biogenesis of c-type cytochromes. Transiently binds heme delivered by CcmC and transfers the heme to apo-cytochromes in a process facilitated by CcmF and CcmH. This Polynucleobacter asymbioticus (strain DSM 18221 / CIP 109841 / QLW-P1DMWA-1) (Polynucleobacter necessarius subsp. asymbioticus) protein is Cytochrome c-type biogenesis protein CcmE.